The chain runs to 207 residues: NADH-quinone oxidoreductase subunit A (207 aa).

3 consecutive transmembrane segments (helical) span residues 6–26 (LSAI…LVVP), 62–82 (LVAI…AYAV), and 87–107 (AGWL…IGLV).

The protein belongs to the complex I subunit 3 family. As to quaternary structure, NDH-1 is composed of 14 different subunits. Subunits NuoA, H, J, K, L, M, N constitute the membrane sector of the complex.

Its subcellular location is the cell inner membrane. The catalysed reaction is a quinone + NADH + 5 H(+)(in) = a quinol + NAD(+) + 4 H(+)(out). Its function is as follows. NDH-1 shuttles electrons from NADH, via FMN and iron-sulfur (Fe-S) centers, to quinones in the respiratory chain. The immediate electron acceptor for the enzyme in this species is believed to be ubiquinone. Couples the redox reaction to proton translocation (for every two electrons transferred, four hydrogen ions are translocated across the cytoplasmic membrane), and thus conserves the redox energy in a proton gradient. The chain is NADH-quinone oxidoreductase subunit A from Psychrobacter cryohalolentis (strain ATCC BAA-1226 / DSM 17306 / VKM B-2378 / K5).